Here is a 273-residue protein sequence, read N- to C-terminus: Glutamate transport system permease protein GluD (273 aa).

Transmembrane regions (helical) follow at residues 26-46 (ILPGLWGTLKSAVFSVILALV), 64-84 (WFCAVIIETFRAIPVLILMIF), 100-120 (LAFAAVVFGLTMYNGSVIAEI), 150-170 (ILLPQAVAAMLPALISQMVIA), and 200-220 (LAALFVVALIMIVLNFSLTAL). One can recognise an ABC transmembrane type-1 domain in the interval 30–221 (LWGTLKSAVF…VLNFSLTALA (192 aa)). The tract at residues 242 to 273 (PEQPDQGLETKDNVNVDWQDPDYKDLKTPGVQ) is disordered. Residues 262 to 273 (PDYKDLKTPGVQ) are compositionally biased toward basic and acidic residues.

It belongs to the binding-protein-dependent transport system permease family. HisMQ subfamily. As to quaternary structure, the complex is composed of two ATP-binding proteins (GluA), two transmembrane proteins (GluC and GluD) and a solute-binding protein (GluB).

The protein localises to the cell membrane. Its function is as follows. Part of the ABC transporter complex GluABCD involved in glutamate uptake. Probably responsible for the translocation of the substrate across the membrane. This Corynebacterium glutamicum (strain ATCC 13032 / DSM 20300 / JCM 1318 / BCRC 11384 / CCUG 27702 / LMG 3730 / NBRC 12168 / NCIMB 10025 / NRRL B-2784 / 534) protein is Glutamate transport system permease protein GluD.